We begin with the raw amino-acid sequence, 1229 residues long: Receptor-type adenylate cyclase GRESAG 4.3 (1229 aa).

The Cytoplasmic portion of the chain corresponds to 1–24 (MIARVCRLTKHSKPPHLPITLTTP). A helical membrane pass occupies residues 25–45 (TLFLVVLVLLQLHPICVLVNV). The Extracellular segment spans residues 46-845 (DDGGGVTVKA…PNGNALTPAQ (800 aa)). 5 N-linked (GlcNAc...) asparagine glycosylation sites follow: asparagine 77, asparagine 84, asparagine 626, asparagine 693, and asparagine 768. The chain crosses the membrane as a helical span at residues 846–866 (LAGVVGGSLFVVALAICLSVL). Topologically, residues 867 to 1229 (ACFTLRGTRD…SNDLSDMIRV (363 aa)) are cytoplasmic. A Guanylate cyclase domain is found at 889-1043 (TLIFTDIESS…RTSNMAARTE (155 aa)). Aspartate 894 and aspartate 937 together coordinate Mg(2+).

This sequence belongs to the adenylyl cyclase class-3 family. Requires Mg(2+) as cofactor.

It is found in the membrane. It catalyses the reaction ATP = 3',5'-cyclic AMP + diphosphate. In terms of biological role, could act as a receptor for an unknown ligand. This chain is Receptor-type adenylate cyclase GRESAG 4.3 (GRESAG 4.3), found in Trypanosoma brucei brucei.